The primary structure comprises 410 residues: Provicilin (410 aa).

Positions 1-15 are cleaved as a signal peptide; sequence MLLAIAFLASVCVSS. Positions 23 to 181 constitute a Cupin type-1 1 domain; it reads FIFKSNRFQT…AFNTNYEEIE (159 aa). Disordered regions lie at residues 223 to 242 and 312 to 331; these read SKNAKSSSKKSVSSESGPFN and QRNENQGKENDKEEEQEEET. Over residues 225–238 the composition is skewed to low complexity; that stretch reads NAKSSSKKSVSSES. Residues 241 to 409 form the Cupin type-1 2 domain; the sequence is FNLRSRNPIY…AFPGSSHEVD (169 aa). Asn359 is a glycosylation site (N-linked (GlcNAc...) asparagine).

It belongs to the 7S seed storage protein family.

It is found in the vacuole. It localises to the aleurone grain. Seed storage protein. In Pisum sativum (Garden pea), this protein is Provicilin.